Consider the following 686-residue polypeptide: Chondroitin synthase (686 aa).

The segment at 130–417 (YVWAGKRKEL…LLQQKVPYFY (288 aa)) is galactosaminyltransferase; A1 domain. Residues Pro157, Arg161, Asp188, Tyr217, Arg223, and 239–240 (DC) each bind UDP-N-acetyl-alpha-D-galactosamine. Asp241 is a binding site for Mn(2+). 361–362 (ED) lines the UDP-N-acetyl-alpha-D-galactosamine pocket. His386 is a Mn(2+) binding site. The segment at 418–682 (RKKEKIESAT…ECRKYTWEKI (265 aa)) is glucuronosyltransferase; A2 domain. Residues Tyr441, Asp469, and 517–520 (QLDS) contribute to the UDP-alpha-D-glucuronate site. A Mn(2+)-binding site is contributed by Asp521. Residues His581 and 603-604 (AV) each bind UDP-alpha-D-glucuronate. His631 is a Mn(2+) binding site.

Belongs to the glycosyltransferase 2 family. CS/HAS subfamily. It depends on Mn(2+) as a cofactor.

The catalysed reaction is 3-O-(beta-D-GlcA-(1-&gt;3)-beta-D-GalNAc-(1-&gt;4)-beta-D-GlcA-(1-&gt;3)-beta-D-Gal-(1-&gt;3)-beta-D-Gal-(1-&gt;4)-beta-D-Xyl)-L-seryl-[protein] + UDP-N-acetyl-alpha-D-galactosamine = 3-O-(beta-D-GalNAc-(1-&gt;4)-beta-D-GlcA-(1-&gt;3)-beta-D-GalNAc-(1-&gt;4)-beta-D-GlcA-(1-&gt;3)-beta-D-Gal-(1-&gt;3)-beta-D-Gal-(1-&gt;4)-beta-D-Xyl)-L-seryl-[protein] + UDP + H(+). It catalyses the reaction 3-O-{beta-D-GlcA-(1-&gt;3)-[beta-D-GalNAc-(1-&gt;4)-beta-D-GlcA-(1-&gt;3)](n)-beta-D-GalNAc-(1-&gt;4)-beta-D-GlcA-(1-&gt;3)-beta-D-Gal-(1-&gt;3)-beta-D-Gal-(1-&gt;4)-beta-D-Xyl}-L-seryl-[protein] + UDP-N-acetyl-alpha-D-galactosamine = 3-O-{[beta-D-GalNAc-(1-&gt;4)-beta-D-GlcA-(1-&gt;3)](n+1)-beta-D-GalNAc-(1-&gt;4)-beta-D-GlcA-(1-&gt;3)-beta-D-Gal-(1-&gt;3)-beta-D-Gal-(1-&gt;4)-beta-D-Xyl}-L-seryl-[protein] + UDP + H(+). It carries out the reaction 3-O-(beta-D-GalNAc-(1-&gt;4)-beta-D-GlcA-(1-&gt;3)-beta-D-Gal-(1-&gt;3)-beta-D-Gal-(1-&gt;4)-beta-D-Xyl)-L-seryl-[protein] + UDP-alpha-D-glucuronate = 3-O-(beta-D-GlcA-(1-&gt;3)-beta-D-GalNAc-(1-&gt;4)-beta-D-GlcA-(1-&gt;3)-beta-D-Gal-(1-&gt;3)-beta-D-Gal-(1-&gt;4)-beta-D-Xyl)-L-seryl-[protein] + UDP + H(+). The enzyme catalyses 3-O-{[beta-D-GalNAc-(1-&gt;4)-beta-D-GlcA-(1-&gt;3)](n)-beta-D-GalNAc-(1-&gt;4)-beta-D-GlcA-(1-&gt;3)-beta-D-Gal-(1-&gt;3)-beta-D-Gal-(1-&gt;4)-beta-D-Xyl}-L-seryl-[protein] + UDP-alpha-D-glucuronate = 3-O-{beta-D-GlcA-(1-&gt;3)-[beta-D-GalNAc-(1-&gt;4)-beta-D-GlcA-(1-&gt;3)](n)-beta-D-GalNAc-(1-&gt;4)-beta-D-GlcA-(1-&gt;3)-beta-D-Gal-(1-&gt;3)-beta-D-Gal-(1-&gt;4)-beta-D-Xyl}-L-seryl-[protein] + UDP + H(+). Its function is as follows. Glycosyltransferase that catalyzes elongation of chondroitin, a polysaccharide composed of a repeating disaccharide of N-acetylgalactosamine (GalNAc) and glucuronic acid (GlcUA) units, by alternatively transferring the GlcUA and GalNAc moiety from UDP-GlcUA and UDP-GalNAc to the non-reducing ends of the chondroitin chain. Each chondroitin unit has the composition beta-(1-&gt;4)-GlcUA-beta-(1-&gt;3)-GalNAc. In Escherichia coli, this protein is Chondroitin synthase (kfoC).